The sequence spans 377 residues: Nitric oxide reductase FlRd-NAD(+) reductase (377 aa).

It belongs to the FAD-dependent oxidoreductase family. The cofactor is FAD.

The protein resides in the cytoplasm. It catalyses the reaction 2 reduced [nitric oxide reductase rubredoxin domain] + NAD(+) + H(+) = 2 oxidized [nitric oxide reductase rubredoxin domain] + NADH. It functions in the pathway nitrogen metabolism; nitric oxide reduction. Functionally, one of at least two accessory proteins for anaerobic nitric oxide (NO) reductase. Reduces the rubredoxin moiety of NO reductase. This is Nitric oxide reductase FlRd-NAD(+) reductase from Escherichia coli O139:H28 (strain E24377A / ETEC).